We begin with the raw amino-acid sequence, 1434 residues long: MGARASVLSGGKLDAWEKIRLRPGGKKKYRLKHIVWASRELKRFALNPGLLETTEGCKKIIGQLQPSLQTGSEELKSLFNTIVVLYYVHQKIEVRDTKEALDKLQEEQDKHQQKTQQATADKGVSKGVSQNYPILQNLQGQMVHQSLSPRTLNAWVKVIEEKAFSPEVIPMFSALSEGATPQDLNTMLNTVGGHQAAMQMLKDTINEEAAEWDRLHPVHAGPIPPGQMREPRGSDIAGTTSTLQEQIAWMTSNPPVPVGEIYKRWIILGLNKIVRMYSPVSILDIKQGPKEPFRDYVDRFFKTLRAEQATQEVKGWMTETLLVQNANPDCKTILKALGPGATLEEMMTACQGVGGPSHKARILAEAMSKATGAAIMMQKSNFKGQRRIVKCFNCGKEGHIARNCRAPRKRGCWKCGQEGHQMKDCTERQANFFRENVAFQQGEARKFSSEQTRANSPASRELRVRGGDSSLPEAGAERQGTGSSLDFPQITLWQRPVVTIKVGGQLREALLDTGADDTVLEDINLPGKWKPKMIGGIGGFIKVRQYDQVSIEICGQKAIGTVLVGPTPVNIIGRNMLTQIGCTLNFPISPIETVPVKLKPGMDGPKVKQWPLTEEKIKALTEICTEMEKEGKISKIGPENPYNTPVFAIKKKDSTKWRKLVDFRELNKRTQDFWEVQLGIPHPAGLKKKRSVTVLDVGDAYFSVPLDKEFRKYTAFTIPSINNETPGIRYQYNVLPQGWKGSPAIFQSSMIKILEPFRKENPEIVIYQYMDDLYVGSDLEIGQHRAKIEELREHLLRWGFTTPDKKHQKEPPFLWMGYELHPDKWTVQAIQLPDKSSWTVNDIQKLVGKLNWASQIYPGIRVKHLCKLLRGTKALTDVVPLTAEAELELAENREILKEPVHGVYYDPSKDLIAEIQKQGHDQWTYQIYQEPHKNLKTGKYARRKSAHTNDVKQLTEVVQKVATEGIVIWGKVPKFRLPIQKETWEIWWTEYWQATWIPEWEFVNTPPLVKLWYQLETEPIIGAETFYVDGAANRETKLGKAGYITDRGRQKVVSLTETTNQKTELQAIQLALQDSGSEVNIVTDSQYALGIIQAHPDKSESEIVNQIIEQLIQKERVYLSWVPAHKGIGGNEQVDKLVSTGIRKVLFLDGIDKAQEEHEKYHSNWRAMASDFNLPPVVAKEIVASCDKCQLKGEAMHGQVDCSPGIWQLDCTHLEGKIILVAVHVASGYIEAEVIPAETGQEAAYFILKLAGRWPVKIIHTDNGSNFTSAVVKAACWWAGIQQEFGIPYNPQSQGVVESMNKELKKIIGQVRDQAEHLKTAVQMAVFIHNFKRKGGIGGYSAGERIIDIIATDIQTKELQKQISKIQNFRVYFRDSRDPVWKGPAKLLWKGEGAVVIQDNNEIKVIPRRKAKIIRDYGKQMAGDDCVAGRQDED.

Glycine 2 carries the N-myristoyl glycine; by host lipid modification. Residues 7-31 are interaction with Gp41; it reads VLSGGKLDAWEKIRLRPGGKKKYRL. Positions 8-43 are interaction with host CALM1; that stretch reads LSGGKLDAWEKIRLRPGGKKKYRLKHIVWASRELKR. Residues 12–19 form an interaction with host AP3D1 region; sequence KLDAWEKI. The interaction with membrane phosphatidylinositol 4,5-bisphosphate and RNA stretch occupies residues 14 to 33; it reads DAWEKIRLRPGGKKKYRLKH. Positions 16–22 match the Nuclear export signal motif; it reads WEKIRLR. A Nuclear localization signal motif is present at residues 26–32; sequence KKKYRLK. An interaction with membrane phosphatidylinositol 4,5-bisphosphate region spans residues 73–77; that stretch reads EELKS. Basic and acidic residues predominate over residues 103–112; it reads KLQEEQDKHQ. Positions 103–124 are disordered; sequence KLQEEQDKHQQKTQQATADKGV. Tyrosine 132 is subject to Phosphotyrosine; by host. The interval 189–227 is interaction with human PPIA/CYPA and NUP153; it reads NTVGGHQAAMQMLKDTINEEAAEWDRLHPVHAGPIPPGQ. The tract at residues 277–363 is dimerization/Multimerization of capsid protein p24; it reads YSPVSILDIK…GGPSHKARIL (87 aa). 2 consecutive CCHC-type zinc fingers follow at residues 389-406 and 410-427; these read VKCFNCGKEGHIARNCRA and RGCWKCGQEGHQMKDCTE. Residues 443 to 483 form a disordered region; sequence EARKFSSEQTRANSPASRELRVRGGDSSLPEAGAERQGTGS. Positions 449–458 are enriched in polar residues; the sequence is SEQTRANSPA. Residues 488–492 are dimerization of protease; the sequence is PQITL. In terms of domain architecture, Peptidase A2 spans 507–576; it reads REALLDTGAD…TPVNIIGRNM (70 aa). Aspartate 512 (for protease activity; shared with dimeric partner) is an active-site residue. 2 dimerization of protease regions span residues 536-542 and 575-587; these read GIGGFIK and NMLTQIGCTLNFP. Positions 630–820 constitute a Reverse transcriptase domain; it reads EGKISKIGPE…PPFLWMGYEL (191 aa). Residues aspartate 696, aspartate 771, and aspartate 772 each contribute to the Mg(2+) site. Residues 813-821 form an RT 'primer grip' region; it reads FLWMGYELH. Positions 984–1000 match the Tryptophan repeat motif motif; it reads WEIWWTEYWQATWIPEW. The RNase H type-1 domain maps to 1020-1143; sequence IIGAETFYVD…VDKLVSTGIR (124 aa). Residues aspartate 1029, glutamate 1064, aspartate 1084, and aspartate 1135 each contribute to the Mg(2+) site. Residues 1149 to 1190 form an Integrase-type zinc finger; that stretch reads DGIDKAQEEHEKYHSNWRAMASDFNLPPVVAKEIVASCDKCQ. Zn(2+) contacts are provided by histidine 1158, histidine 1162, cysteine 1186, and cysteine 1189. An Integrase catalytic domain is found at 1200–1350; the sequence is VDCSPGIWQL…SAGERIIDII (151 aa). Aspartate 1210, aspartate 1262, and glutamate 1298 together coordinate Mg(2+). Residues 1369–1416 constitute a DNA-binding region (integrase-type); it reads FRVYFRDSRDPVWKGPAKLLWKGEGAVVIQDNNEIKVIPRRKAKIIRD.

In terms of assembly, homotrimer; further assembles as hexamers of trimers. Interacts with gp41 (via C-terminus). Interacts with host CALM1; this interaction induces a conformational change in the Matrix protein, triggering exposure of the myristate group. Interacts with host AP3D1; this interaction allows the polyprotein trafficking to multivesicular bodies during virus assembly. Part of the pre-integration complex (PIC) which is composed of viral genome, matrix protein, Vpr and integrase. As to quaternary structure, homodimer; the homodimer further multimerizes as homohexamers or homopentamers. Interacts with human PPIA/CYPA; This interaction stabilizes the capsid. Interacts with human NUP153. Interacts with host PDZD8; this interaction stabilizes the capsid. Interacts with monkey TRIM5; this interaction destabilizes the capsid. Homodimer, whose active site consists of two apposed aspartic acid residues. In terms of assembly, heterodimer of p66 RT and p51 RT (RT p66/p51). Heterodimerization of RT is essential for DNA polymerase activity. The overall folding of the subdomains is similar in p66 RT and p51 RT but the spatial arrangements of the subdomains are dramatically different. As to quaternary structure, homotetramer; may further associate as a homohexadecamer. Part of the pre-integration complex (PIC) which is composed of viral genome, matrix protein, Vpr and integrase. Interacts with human SMARCB1/INI1 and human PSIP1/LEDGF isoform 1. Interacts with human KPNA3; this interaction might play a role in nuclear import of the pre-integration complex. Interacts with human NUP153; this interaction might play a role in nuclear import of the pre-integration complex. The cofactor is Mg(2+). In terms of processing, specific enzymatic cleavages by the viral protease yield mature proteins. The protease is released by autocatalytic cleavage. The polyprotein is cleaved during and after budding, this process is termed maturation. Proteolytic cleavage of p66 RT removes the RNase H domain to yield the p51 RT subunit. Nucleocapsid protein p7 might be further cleaved after virus entry. Post-translationally, tyrosine phosphorylated presumably in the virion by a host kinase. Phosphorylation is apparently not a major regulator of membrane association. Phosphorylated possibly by host MAPK1; this phosphorylation is necessary for Pin1-mediated virion uncoating. In terms of processing, methylated by host PRMT6, impairing its function by reducing RNA annealing and the initiation of reverse transcription.

The protein localises to the host cell membrane. It localises to the host endosome. Its subcellular location is the host multivesicular body. The protein resides in the virion membrane. It is found in the host nucleus. The protein localises to the host cytoplasm. It localises to the virion. It catalyses the reaction Specific for a P1 residue that is hydrophobic, and P1' variable, but often Pro.. It carries out the reaction Endohydrolysis of RNA in RNA/DNA hybrids. Three different cleavage modes: 1. sequence-specific internal cleavage of RNA. Human immunodeficiency virus type 1 and Moloney murine leukemia virus enzymes prefer to cleave the RNA strand one nucleotide away from the RNA-DNA junction. 2. RNA 5'-end directed cleavage 13-19 nucleotides from the RNA end. 3. DNA 3'-end directed cleavage 15-20 nucleotides away from the primer terminus.. The enzyme catalyses 3'-end directed exonucleolytic cleavage of viral RNA-DNA hybrid.. The catalysed reaction is DNA(n) + a 2'-deoxyribonucleoside 5'-triphosphate = DNA(n+1) + diphosphate. With respect to regulation, protease: The viral protease is inhibited by many synthetic protease inhibitors (PIs), such as amprenavir, atazanavir, indinavir, loprinavir, nelfinavir, ritonavir and saquinavir. Use of protease inhibitors in tritherapy regimens permit more ambitious therapeutic strategies. Reverse transcriptase/ribonuclease H: RT can be inhibited either by nucleoside RT inhibitors (NRTIs) or by non nucleoside RT inhibitors (NNRTIs). NRTIs act as chain terminators, whereas NNRTIs inhibit DNA polymerization by binding a small hydrophobic pocket near the RT active site and inducing an allosteric change in this region. Classical NRTIs are abacavir, adefovir (PMEA), didanosine (ddI), lamivudine (3TC), stavudine (d4T), tenofovir (PMPA), zalcitabine (ddC), and zidovudine (AZT). Classical NNRTIs are atevirdine (BHAP U-87201E), delavirdine, efavirenz (DMP-266), emivirine (I-EBU), and nevirapine (BI-RG-587). The tritherapies used as a basic effective treatment of AIDS associate two NRTIs and one NNRTI. Mediates, with Gag polyprotein, the essential events in virion assembly, including binding the plasma membrane, making the protein-protein interactions necessary to create spherical particles, recruiting the viral Env proteins, and packaging the genomic RNA via direct interactions with the RNA packaging sequence (Psi). Gag-Pol polyprotein may regulate its own translation, by the binding genomic RNA in the 5'-UTR. At low concentration, the polyprotein would promote translation, whereas at high concentration, the polyprotein would encapsidate genomic RNA and then shut off translation. Functionally, targets the polyprotein to the plasma membrane via a multipartite membrane-binding signal, that includes its myristoylated N-terminus. Matrix protein is part of the pre-integration complex. Implicated in the release from host cell mediated by Vpu. Binds to RNA. Its function is as follows. Forms the conical core that encapsulates the genomic RNA-nucleocapsid complex in the virion. Most core are conical, with only 7% tubular. The core is constituted by capsid protein hexamer subunits. The core is disassembled soon after virion entry. Host restriction factors such as TRIM5-alpha or TRIMCyp bind retroviral capsids and cause premature capsid disassembly, leading to blocks in reverse transcription. Capsid restriction by TRIM5 is one of the factors which restricts HIV-1 to the human species. Host PIN1 apparently facilitates the virion uncoating. On the other hand, interactions with PDZD8 or CYPA stabilize the capsid. In terms of biological role, encapsulates and protects viral dimeric unspliced genomic RNA (gRNA). Binds these RNAs through its zinc fingers. Acts as a nucleic acid chaperone which is involved in rearangement of nucleic acid secondary structure during gRNA retrotranscription. Also facilitates template switch leading to recombination. As part of the polyprotein, participates in gRNA dimerization, packaging, tRNA incorporation and virion assembly. Aspartyl protease that mediates proteolytic cleavages of Gag and Gag-Pol polyproteins during or shortly after the release of the virion from the plasma membrane. Cleavages take place as an ordered, step-wise cascade to yield mature proteins. This process is called maturation. Displays maximal activity during the budding process just prior to particle release from the cell. Also cleaves Nef and Vif, probably concomitantly with viral structural proteins on maturation of virus particles. Hydrolyzes host EIF4GI and PABP1 in order to shut off the capped cellular mRNA translation. The resulting inhibition of cellular protein synthesis serves to ensure maximal viral gene expression and to evade host immune response. Also mediates cleavage of host YTHDF3. Mediates cleavage of host CARD8, thereby activating the CARD8 inflammasome, leading to the clearance of latent HIV-1 in patient CD4(+) T-cells after viral reactivation; in contrast, HIV-1 can evade CARD8-sensing when its protease remains inactive in infected cells prior to viral budding. Functionally, multifunctional enzyme that converts the viral RNA genome into dsDNA in the cytoplasm, shortly after virus entry into the cell. This enzyme displays a DNA polymerase activity that can copy either DNA or RNA templates, and a ribonuclease H (RNase H) activity that cleaves the RNA strand of RNA-DNA heteroduplexes in a partially processive 3' to 5' endonucleasic mode. Conversion of viral genomic RNA into dsDNA requires many steps. A tRNA(3)-Lys binds to the primer-binding site (PBS) situated at the 5'-end of the viral RNA. RT uses the 3' end of the tRNA primer to perform a short round of RNA-dependent minus-strand DNA synthesis. The reading proceeds through the U5 region and ends after the repeated (R) region which is present at both ends of viral RNA. The portion of the RNA-DNA heteroduplex is digested by the RNase H, resulting in a ssDNA product attached to the tRNA primer. This ssDNA/tRNA hybridizes with the identical R region situated at the 3' end of viral RNA. This template exchange, known as minus-strand DNA strong stop transfer, can be either intra- or intermolecular. RT uses the 3' end of this newly synthesized short ssDNA to perform the RNA-dependent minus-strand DNA synthesis of the whole template. RNase H digests the RNA template except for two polypurine tracts (PPTs) situated at the 5'-end and near the center of the genome. It is not clear if both polymerase and RNase H activities are simultaneous. RNase H probably can proceed both in a polymerase-dependent (RNA cut into small fragments by the same RT performing DNA synthesis) and a polymerase-independent mode (cleavage of remaining RNA fragments by free RTs). Secondly, RT performs DNA-directed plus-strand DNA synthesis using the PPTs that have not been removed by RNase H as primers. PPTs and tRNA primers are then removed by RNase H. The 3' and 5' ssDNA PBS regions hybridize to form a circular dsDNA intermediate. Strand displacement synthesis by RT to the PBS and PPT ends produces a blunt ended, linear dsDNA copy of the viral genome that includes long terminal repeats (LTRs) at both ends. Its function is as follows. Catalyzes viral DNA integration into the host chromosome, by performing a series of DNA cutting and joining reactions. This enzyme activity takes place after virion entry into a cell and reverse transcription of the RNA genome in dsDNA. The first step in the integration process is 3' processing. This step requires a complex comprising the viral genome, matrix protein, Vpr and integrase. This complex is called the pre-integration complex (PIC). The integrase protein removes 2 nucleotides from each 3' end of the viral DNA, leaving recessed CA OH's at the 3' ends. In the second step, the PIC enters cell nucleus. This process is mediated through integrase and Vpr proteins, and allows the virus to infect a non dividing cell. This ability to enter the nucleus is specific of lentiviruses, other retroviruses cannot and rely on cell division to access cell chromosomes. In the third step, termed strand transfer, the integrase protein joins the previously processed 3' ends to the 5' ends of strands of target cellular DNA at the site of integration. The 5'-ends are produced by integrase-catalyzed staggered cuts, 5 bp apart. A Y-shaped, gapped, recombination intermediate results, with the 5'-ends of the viral DNA strands and the 3' ends of target DNA strands remaining unjoined, flanking a gap of 5 bp. The last step is viral DNA integration into host chromosome. This involves host DNA repair synthesis in which the 5 bp gaps between the unjoined strands are filled in and then ligated. Since this process occurs at both cuts flanking the HIV genome, a 5 bp duplication of host DNA is produced at the ends of HIV-1 integration. Alternatively, Integrase may catalyze the excision of viral DNA just after strand transfer, this is termed disintegration. This Homo sapiens (Human) protein is Gag-Pol polyprotein (gag-pol).